The following is a 189-amino-acid chain: Protein F29A7.6 (189 aa).

The interval 124 to 161 is disordered; that stretch reads KSLGGQKLAALDKKSQSKRERRQQNERNEETTGGRRFN. Basic and acidic residues predominate over residues 133 to 161; that stretch reads ALDKKSQSKRERRQQNERNEETTGGRRFN.

The protein belongs to the MPP6 family.

This is Protein F29A7.6 from Caenorhabditis elegans.